The chain runs to 726 residues: Sister chromatid cohesion protein SCC4 (726 aa).

TPR repeat units lie at residues 7–40 (AEGLWGLADHHQKLGEIGKTIKCLEAICQSQISF), 88–121 (FQNYSLLSHCYHLLASFPPQRNLLVKALELASSV), 132–165 (CNFNSQLANTFIIQADFPSSLSALESGFLSASHI), 229–262 (RLRLCDYKNAQHHVDRLDQAMNAHSHKMQEIQQL), 443–477 (PTILQASECMIEMLRGQYSHSVGCYSEAAFHCIEA), 531–564 (ASILFAYGLLLMKQRDLQEARNRLAKGLQIAHNH), and 572–605 (AQYLTLLGNLALSLHDTVQAREILRSSLTLAKKL). Residues 697–726 (SVGIEGPSPAPSSSRLVGLDTGKRWGKRRM) form a disordered region.

Belongs to the SCC4/mau-2 family. In terms of assembly, interacts with SCC2 to form the cohesin loading complex. Expressed ubiquitously.

The protein resides in the nucleus. The protein localises to the cytoplasm. In terms of biological role, essential protein required for cell fate determination during embryogenesis. Involved in sister chromatid cohesion. Forms a complex with SCC2, which is required for the association of the cohesin complex with chromosomes. The chain is Sister chromatid cohesion protein SCC4 from Arabidopsis thaliana (Mouse-ear cress).